A 505-amino-acid polypeptide reads, in one-letter code: Probable cytosol aminopeptidase (505 aa).

Residues Lys-268 and Asp-273 each coordinate Mn(2+). Residue Lys-280 is part of the active site. Mn(2+)-binding residues include Asp-291, Asp-350, and Glu-352. Residue Arg-354 is part of the active site.

It belongs to the peptidase M17 family. Requires Mn(2+) as cofactor.

It localises to the cytoplasm. It catalyses the reaction Release of an N-terminal amino acid, Xaa-|-Yaa-, in which Xaa is preferably Leu, but may be other amino acids including Pro although not Arg or Lys, and Yaa may be Pro. Amino acid amides and methyl esters are also readily hydrolyzed, but rates on arylamides are exceedingly low.. The enzyme catalyses Release of an N-terminal amino acid, preferentially leucine, but not glutamic or aspartic acids.. Its function is as follows. Presumably involved in the processing and regular turnover of intracellular proteins. Catalyzes the removal of unsubstituted N-terminal amino acids from various peptides. The sequence is that of Probable cytosol aminopeptidase from Syntrophobacter fumaroxidans (strain DSM 10017 / MPOB).